The chain runs to 171 residues: Regulator of ribonuclease activity A (171 aa).

This sequence belongs to the RraA family. As to quaternary structure, homotrimer. Binds to both RNA-binding sites in the C-terminal region of Rne and to RhlB.

It localises to the cytoplasm. Its function is as follows. Globally modulates RNA abundance by binding to RNase E (Rne) and regulating its endonucleolytic activity. Can modulate Rne action in a substrate-dependent manner by altering the composition of the degradosome. Modulates RNA-binding and helicase activities of the degradosome. This is Regulator of ribonuclease activity A from Vibrio cholerae serotype O1 (strain ATCC 39315 / El Tor Inaba N16961).